The primary structure comprises 235 residues: Glycerol uptake facilitator protein 2 (235 aa).

The next 6 helical transmembrane spans lie at 4–24 (FLGEFLGTMVLIVFGVGSGAA), 39–59 (FICLAWGLAVTFGVYVAGQFG), 62–82 (GHLNPAVTVGFALFGYLPMAN), 83–103 (VWPYLLGQFLGAFIGAVIVII), 134–154 (VFNFLSETIATFFFIFVLLNL), and 165–185 (MVGLLIVVVGQTLGGTTGFAI). The short motif at 65–67 (NPA) is the NPA 1 element. An NPA 2 motif is present at residues 186 to 188 (NPA). A helical transmembrane segment spans residues 210–230 (WGYAWVPMFGPLLGGILAAGL).

This sequence belongs to the MIP/aquaporin (TC 1.A.8) family.

The protein localises to the cell membrane. Transporter that facilitates the transmembrane diffusion of water, dihydroxyacetone, glycerol and H(2)O(2). Is not permeable to urea and D/L-lactic acid. In Lactiplantibacillus plantarum (strain ATCC BAA-793 / NCIMB 8826 / WCFS1) (Lactobacillus plantarum), this protein is Glycerol uptake facilitator protein 2.